Consider the following 265-residue polypeptide: Phosphatidylserine decarboxylase proenzyme (265 aa).

Catalysis depends on charge relay system; for autoendoproteolytic cleavage activity residues Asp86, His142, and Ser226. Ser226 functions as the Schiff-base intermediate with substrate; via pyruvic acid; for decarboxylase activity in the catalytic mechanism. A Pyruvic acid (Ser); by autocatalysis modification is found at Ser226.

This sequence belongs to the phosphatidylserine decarboxylase family. PSD-B subfamily. Prokaryotic type I sub-subfamily. As to quaternary structure, heterodimer of a large membrane-associated beta subunit and a small pyruvoyl-containing alpha subunit. Requires pyruvate as cofactor. Is synthesized initially as an inactive proenzyme. Formation of the active enzyme involves a self-maturation process in which the active site pyruvoyl group is generated from an internal serine residue via an autocatalytic post-translational modification. Two non-identical subunits are generated from the proenzyme in this reaction, and the pyruvate is formed at the N-terminus of the alpha chain, which is derived from the carboxyl end of the proenzyme. The autoendoproteolytic cleavage occurs by a canonical serine protease mechanism, in which the side chain hydroxyl group of the serine supplies its oxygen atom to form the C-terminus of the beta chain, while the remainder of the serine residue undergoes an oxidative deamination to produce ammonia and the pyruvoyl prosthetic group on the alpha chain. During this reaction, the Ser that is part of the protease active site of the proenzyme becomes the pyruvoyl prosthetic group, which constitutes an essential element of the active site of the mature decarboxylase.

It localises to the cell membrane. The enzyme catalyses a 1,2-diacyl-sn-glycero-3-phospho-L-serine + H(+) = a 1,2-diacyl-sn-glycero-3-phosphoethanolamine + CO2. It participates in phospholipid metabolism; phosphatidylethanolamine biosynthesis; phosphatidylethanolamine from CDP-diacylglycerol: step 2/2. Its function is as follows. Catalyzes the formation of phosphatidylethanolamine (PtdEtn) from phosphatidylserine (PtdSer). This Anoxybacillus flavithermus (strain DSM 21510 / WK1) protein is Phosphatidylserine decarboxylase proenzyme.